The sequence spans 317 residues: NADH kinase (317 aa).

Belongs to the NAD kinase family. As to quaternary structure, homodimer. Ubiquitous.

The protein resides in the cytoplasm. The catalysed reaction is NADH + ATP = ADP + NADPH + H(+). Its activity is regulated as follows. Two-fold decrease in activity in the presence of PPi, iodoacetate or para-chloromercuribenzoate. Phosphorylates specifically NADH. Can phosphorylate NAD with a 100-fold decrease in efficiency compared to NADH. Prefers ATP as nucleoside triphosphate substrate. Can also utilize UTP, GTP and CTP. Key source of the cellular reductant NADPH which is an important antioxidant factor. The chain is NADH kinase (NADK3) from Arabidopsis thaliana (Mouse-ear cress).